The chain runs to 180 residues: MTASAPRRPAAFLDRDGVINYNDHYVGTRERLRWMPGIAAAIRQLNAAGYYVFIITNQSGVARGMFSEDDVRALHRWMLDELNTQGARIDDVRFCPHHVEGTLDAYRVACEHRKPGPGMILDLAKTWPVDMTRSFVIGDSASDVEAAKAAGIPGFRFEGEDIDVFVKQVLIEMQRAAVSN.

Catalysis depends on Asp-14, which acts as the Nucleophile. Asp-14 and Asp-16 together coordinate Mg(2+). Substrate contacts are provided by residues 14-16, 22-25, and 56-59; these read DRD, NDHY, and TNQS. Asp-16 (proton donor) is an active-site residue. Zn(2+)-binding residues include Cys-95, His-97, Cys-110, and His-112. 113–114 contributes to the substrate binding site; it reads RK. Mg(2+) is bound at residue Asp-139.

It belongs to the gmhB family. Monomer. Mg(2+) is required as a cofactor.

The protein resides in the cytoplasm. It carries out the reaction D-glycero-beta-D-manno-heptose 1,7-bisphosphate + H2O = D-glycero-beta-D-manno-heptose 1-phosphate + phosphate. The protein operates within nucleotide-sugar biosynthesis; ADP-L-glycero-beta-D-manno-heptose biosynthesis; ADP-L-glycero-beta-D-manno-heptose from D-glycero-beta-D-manno-heptose 7-phosphate: step 2/4. It participates in bacterial outer membrane biogenesis; LPS core biosynthesis. In terms of biological role, converts the D-glycero-beta-D-manno-heptose 1,7-bisphosphate (beta-HBP) intermediate into D-glycero-beta-D-manno-heptose 1-phosphate by removing the phosphate group at the C-7 position. Also catalyzes the dephosphorylation of D-glycero-alpha-D-manno-heptose 1,7-bisphosphate in vitro. The polypeptide is D-glycero-beta-D-manno-heptose-1,7-bisphosphate 7-phosphatase (Rhodopseudomonas palustris (strain ATCC BAA-98 / CGA009)).